A 218-amino-acid polypeptide reads, in one-letter code: Glycerol-3-phosphate acyltransferase (218 aa).

5 helical membrane-spanning segments follow: residues Ala5–Cys25, Leu53–Ala73, Pro80–Phe100, Ile115–Leu135, and Gly138–Phe158.

It belongs to the PlsY family. Probably interacts with PlsX.

It is found in the cell inner membrane. It catalyses the reaction an acyl phosphate + sn-glycerol 3-phosphate = a 1-acyl-sn-glycero-3-phosphate + phosphate. The protein operates within lipid metabolism; phospholipid metabolism. Its function is as follows. Catalyzes the transfer of an acyl group from acyl-phosphate (acyl-PO(4)) to glycerol-3-phosphate (G3P) to form lysophosphatidic acid (LPA). This enzyme utilizes acyl-phosphate as fatty acyl donor, but not acyl-CoA or acyl-ACP. This chain is Glycerol-3-phosphate acyltransferase, found in Proteus mirabilis (strain HI4320).